Consider the following 66-residue polypeptide: DNA-directed RNA polymerase subunit Rpo10 (66 aa).

C7, C10, C44, and C45 together coordinate Zn(2+).

The protein belongs to the archaeal Rpo10/eukaryotic RPB10 RNA polymerase subunit family. Part of the RNA polymerase complex. The cofactor is Zn(2+).

The protein resides in the cytoplasm. The enzyme catalyses RNA(n) + a ribonucleoside 5'-triphosphate = RNA(n+1) + diphosphate. In terms of biological role, DNA-dependent RNA polymerase (RNAP) catalyzes the transcription of DNA into RNA using the four ribonucleoside triphosphates as substrates. The polypeptide is DNA-directed RNA polymerase subunit Rpo10 (Pyrobaculum islandicum (strain DSM 4184 / JCM 9189 / GEO3)).